Consider the following 1225-residue polypeptide: DNA-directed RNA polymerase subunit beta' (1225 aa).

Positions 60, 62, 75, and 78 each coordinate Zn(2+). Residues Asp-450, Asp-452, and Asp-454 each contribute to the Mg(2+) site. Cys-818, Cys-892, Cys-899, and Cys-902 together coordinate Zn(2+).

Belongs to the RNA polymerase beta' chain family. As to quaternary structure, the RNAP catalytic core consists of 2 alpha, 1 beta, 1 beta' and 1 omega subunit. When a sigma factor is associated with the core the holoenzyme is formed, which can initiate transcription. Mg(2+) serves as cofactor. Zn(2+) is required as a cofactor.

It carries out the reaction RNA(n) + a ribonucleoside 5'-triphosphate = RNA(n+1) + diphosphate. Its function is as follows. DNA-dependent RNA polymerase catalyzes the transcription of DNA into RNA using the four ribonucleoside triphosphates as substrates. In Streptococcus pneumoniae (strain Hungary19A-6), this protein is DNA-directed RNA polymerase subunit beta'.